The sequence spans 820 residues: Catenin beta (820 aa).

A compositionally biased stretch (polar residues) spans 1–16 (MEQARYSNQQSVNPQQ). The tract at residues 1 to 74 (MEQARYSNQQ…SRHEDGGEEA (74 aa)) is disordered. A compositionally biased stretch (low complexity) spans 52–63 (SSATSHPPSVSS). ARM repeat units lie at residues 157 to 196 (NYQDDADLATRAIPELTKLLNDDDLVVVNQAAMMVHQLSK), 199 to 239 (ASRH…NLSH), 241 to 280 (RAGLLQIFKSGGIPALIKLLSSPVESVLFYAITTLHNLLL), 283 to 322 (EGSKMAVRLAGGLQKMVALLSRNNPKFLAITTDCLQILAY), 367 to 405 (HNNKPAIVEAGGMSALGLHLGHHSNRLVQNCLWTLRNLS), 406 to 445 (DCHRGTDDIEPLLQMLVQLLASNDINVVTCACGILSNLTC), 448 to 489 (SRNK…HVTS), 495 to 535 (EMGQ…NLAL), 603 to 642 (SHNRALIQGLNCIPLFVQLLYNNIENIQRVAAGVLSELSL), and 644 to 683 (KQGAEMIEQEGATAPLTELLHSRNEGVATYAAAVLYRMSD). A disordered region spans residues 708 to 811 (PWGDPLDMPS…LDSIPPADNT (104 aa)). The segment covering 785–796 (GMDPGLPDMGPP) has biased composition (low complexity).

The protein belongs to the beta-catenin family.

The protein localises to the cytoplasm. It localises to the cytoskeleton. Its function is as follows. Binds to the cytoplasmic domain of the cell-cell adhesion molecule E-cadherin, and perhaps to other (membrane) proteins. The association of catenins to cadherins produces a complex which is linked to the actin filament network, and which seems to be of primary importance for cadherins cell-adhesion properties. The sequence is that of Catenin beta from Tripneustes gratilla (Hawaian sea urchin).